Reading from the N-terminus, the 135-residue chain is ATP synthase epsilon chain (135 aa).

This sequence belongs to the ATPase epsilon chain family. F-type ATPases have 2 components, CF(1) - the catalytic core - and CF(0) - the membrane proton channel. CF(1) has five subunits: alpha(3), beta(3), gamma(1), delta(1), epsilon(1). CF(0) has three main subunits: a, b and c.

It localises to the cell inner membrane. Produces ATP from ADP in the presence of a proton gradient across the membrane. The polypeptide is ATP synthase epsilon chain (Mesorhizobium japonicum (strain LMG 29417 / CECT 9101 / MAFF 303099) (Mesorhizobium loti (strain MAFF 303099))).